Reading from the N-terminus, the 644-residue chain is Exoribonuclease 2 (644 aa).

The RNB domain maps to 189 to 516 (RRDLTALDFV…NHRLLKAIIK (328 aa)). The S1 motif domain maps to 561–643 (DTRFAAEIID…ETRSIIARPA (83 aa)).

Belongs to the RNR ribonuclease family. RNase II subfamily.

The protein resides in the cytoplasm. It carries out the reaction Exonucleolytic cleavage in the 3'- to 5'-direction to yield nucleoside 5'-phosphates.. In terms of biological role, involved in mRNA degradation. Hydrolyzes single-stranded polyribonucleotides processively in the 3' to 5' direction. The protein is Exoribonuclease 2 of Klebsiella pneumoniae subsp. pneumoniae (strain ATCC 700721 / MGH 78578).